A 968-amino-acid polypeptide reads, in one-letter code: Alanine--tRNA ligase, cytoplasmic (968 aa).

Methionine 1 bears the N-acetylmethionine mark. Serine 3 bears the Phosphoserine mark. Lysine 19 bears the N6-acetyllysine mark. ATP-binding positions include arginine 77, histidine 95, tryptophan 176, and 214 to 216 (IWN). Residues asparagine 216 and aspartate 239 each coordinate L-alanine. Glycine 243 contacts ATP. Residues serine 399 and serine 555 each carry the phosphoserine modification. Positions 605, 609, 723, and 727 each coordinate Zn(2+). The short motif at 750–763 (RRIVAVTGAEAQKA) is the Nuclear localization signal element. Lysine 876 is subject to N6-acetyllysine. An N6,N6,N6-trimethyllysine; alternate modification is found at lysine 943. At lysine 943 the chain carries N6,N6-dimethyllysine; alternate. An N6-methyllysine; alternate modification is found at lysine 943.

It belongs to the class-II aminoacyl-tRNA synthetase family. In terms of assembly, monomer. Interacts with ANKRD16; the interaction is direct. Zn(2+) is required as a cofactor. Post-translationally, ISGylated. Methylation at 'Lys-943' by METTL21C.

The protein localises to the cytoplasm. It is found in the nucleus. The enzyme catalyses tRNA(Ala) + L-alanine + ATP = L-alanyl-tRNA(Ala) + AMP + diphosphate. It carries out the reaction (S)-lactate + ATP + H(+) = (S)-lactoyl-AMP + diphosphate. The catalysed reaction is (S)-lactoyl-AMP + L-lysyl-[protein] = N(6)-[(S)-lactoyl]-L-lysyl-[protein] + AMP + 2 H(+). Its activity is regulated as follows. The protein lactyltransferase activity is inhibited by beta-alanine. Catalyzes the attachment of alanine to tRNA(Ala) in a two-step reaction: alanine is first activated by ATP to form Ala-AMP and then transferred to the acceptor end of tRNA(Ala). Also edits incorrectly charged tRNA(Ala) via its editing domain. In presence of high levels of lactate, also acts as a protein lactyltransferase that mediates lactylation of lysine residues in target proteins, such as TEAD1, TP53/p53 and YAP1. Protein lactylation takes place in a two-step reaction: lactate is first activated by ATP to form lactate-AMP and then transferred to lysine residues of target proteins. Acts as an inhibitor of TP53/p53 activity by catalyzing lactylation of TP53/p53. Acts as a positive regulator of the Hippo pathway by mediating lactylation of TEAD1 and YAP1. This chain is Alanine--tRNA ligase, cytoplasmic (Aars1), found in Rattus norvegicus (Rat).